The chain runs to 826 residues: Lon protease (826 aa).

Residues 1 to 20 show a composition bias toward basic and acidic residues; that stretch reads MSEEELNNRDTESKQEHDEN. The segment at 1-27 is disordered; it reads MSEEELNNRDTESKQEHDENNSNFEAG. In terms of domain architecture, Lon N-terminal spans 33–231; it reads LPVLPLREVI…KVHALLEKEL (199 aa). Position 384 to 391 (384 to 391) interacts with ATP; sequence GPPGVGKT. A Lon proteolytic domain is found at 620–801; sequence ENLVGMTTGL…SEALTFTLAE (182 aa). Catalysis depends on residues Ser707 and Lys750.

Belongs to the peptidase S16 family. In terms of assembly, homohexamer. Organized in a ring with a central cavity.

Its subcellular location is the cytoplasm. The catalysed reaction is Hydrolysis of proteins in presence of ATP.. Its function is as follows. ATP-dependent serine protease that mediates the selective degradation of mutant and abnormal proteins as well as certain short-lived regulatory proteins. Required for cellular homeostasis and for survival from DNA damage and developmental changes induced by stress. Degrades polypeptides processively to yield small peptide fragments that are 5 to 10 amino acids long. Binds to DNA in a double-stranded, site-specific manner. The polypeptide is Lon protease (Neorickettsia sennetsu (strain ATCC VR-367 / Miyayama) (Ehrlichia sennetsu)).